The primary structure comprises 75 residues: Small ribosomal subunit protein bS18 (75 aa).

The protein belongs to the bacterial ribosomal protein bS18 family. As to quaternary structure, part of the 30S ribosomal subunit. Forms a tight heterodimer with protein bS6.

Functionally, binds as a heterodimer with protein bS6 to the central domain of the 16S rRNA, where it helps stabilize the platform of the 30S subunit. In Hydrogenovibrio crunogenus (strain DSM 25203 / XCL-2) (Thiomicrospira crunogena), this protein is Small ribosomal subunit protein bS18.